Consider the following 461-residue polypeptide: Ribulose bisphosphate carboxylase (461 aa).

Residue Asn113 coordinates substrate. The active-site Proton acceptor is the Lys168. Lys170 provides a ligand contact to substrate. 3 residues coordinate Mg(2+): Lys193, Asp195, and Glu196. An N6-carboxylysine modification is found at Lys193. His289 serves as the catalytic Proton acceptor. Positions 290, 323, and 370 each coordinate substrate.

The protein belongs to the RuBisCO large chain family. Type II subfamily. As to quaternary structure, homodimer. Mg(2+) is required as a cofactor.

The catalysed reaction is 2 (2R)-3-phosphoglycerate + 2 H(+) = D-ribulose 1,5-bisphosphate + CO2 + H2O. It carries out the reaction D-ribulose 1,5-bisphosphate + O2 = 2-phosphoglycolate + (2R)-3-phosphoglycerate + 2 H(+). Its function is as follows. RuBisCO catalyzes two reactions: the carboxylation of D-ribulose 1,5-bisphosphate, the primary event in carbon dioxide fixation, as well as the oxidative fragmentation of the pentose substrate. Both reactions occur simultaneously and in competition at the same active site. The sequence is that of Ribulose bisphosphate carboxylase from Thiomonas intermedia (strain K12) (Thiobacillus intermedius).